The primary structure comprises 85 residues: Arminin 524 (85 aa).

A signal peptide spans 1–18 (MKAVFAILFLAFIALTYA). Positions 19–57 (KSYDEVKEEIKNEVEREIFEDLEEESDELDNDVEEFNDA) are excised as a propeptide. An Alanine amide modification is found at Ala-82.

It belongs to the arminin family. Expressed in entodermal epithelium along the body column.

The protein localises to the secreted. Its subcellular location is the target cell membrane. Functionally, antimicrobial peptide with a broad-spectrum antimicrobial activity. Keeps its antibacterial activity under a wide range of salt concentrations that mimic physiological conditions of human blood, which is surprising, since Hydra is an obligate freshwater animal with nearly no salt tolerance. Does not affect red blood cells. This is Arminin 524 from Hydra oligactis (Brown hydra).